We begin with the raw amino-acid sequence, 325 residues long: Zinc finger C2HC domain-containing protein 1A (325 aa).

The C2HC/C3H-type 1 zinc finger occupies 15–44; sequence ELLPCKICGRTFFPVALKKHGPICQKTATK. Positions 19, 22, 34, and 38 each coordinate Zn(2+). The interval 43–83 is disordered; sequence TKKRKTFDSSRQRAEGTDIPTVKPLKPRPEPPKKPSNWRRK. A compositionally biased stretch (basic and acidic residues) spans 48–58; that stretch reads TFDSSRQRAEG. A C2HC/C3H-type 2 zinc finger spans residues 118 to 147; sequence DYIQCPYCQRRFNENAADRHINFCKEQAAR. Residues C122, C125, H137, and C141 each contribute to the Zn(2+) site. A disordered region spans residues 150–260; the sequence is NKGKFSTDTK…NPAPGVLTNK (111 aa). 2 stretches are compositionally biased toward low complexity: residues 177–188 and 197–216; these read SNSPGTASSGSS and GKTV…SSLG. Phosphoserine is present on S223. Position 244 is a phosphothreonine (T244). S292 is modified (phosphoserine).

It belongs to the ZC2HC1 family. Zn(2+) serves as cofactor.

The sequence is that of Zinc finger C2HC domain-containing protein 1A (ZC2HC1A) from Homo sapiens (Human).